A 297-amino-acid polypeptide reads, in one-letter code: Homoserine kinase (297 aa).

82–92 is an ATP binding site; that stretch reads PVSRGLGSSAA.

It belongs to the GHMP kinase family. Homoserine kinase subfamily.

It localises to the cytoplasm. It catalyses the reaction L-homoserine + ATP = O-phospho-L-homoserine + ADP + H(+). The protein operates within amino-acid biosynthesis; L-threonine biosynthesis; L-threonine from L-aspartate: step 4/5. In terms of biological role, catalyzes the ATP-dependent phosphorylation of L-homoserine to L-homoserine phosphate. The sequence is that of Homoserine kinase from Clostridium botulinum (strain Loch Maree / Type A3).